Consider the following 121-residue polypeptide: Met-lysine-1a (121 aa).

An N-terminal signal peptide occupies residues 1–22 (MKSFVFALALIVAFACISESKS). Positions 23 to 69 (DHTGYEEEENLEDSELTDLVTAALLEELAEASEMDDLSYTEEAGGER) are excised as a propeptide. Met-120 bears the Methionine amide mark.

As to expression, expressed by the venom gland.

The protein localises to the secreted. Functionally, shows no antimicrobial activity against Gram-positive bacterium B.subtilis B-501 or Gram-negative bacterium E.coli DH5-alpha at concentrations up to 20 ug/ml. Shows no toxicity towards insect (S.carnaria) larvae. The sequence is that of Met-lysine-1a from Lachesana tarabaevi (Spider).